Consider the following 172-residue polypeptide: 3-hydroxydecanoyl-[acyl-carrier-protein] dehydratase (172 aa).

Residue His71 is part of the active site.

This sequence belongs to the thioester dehydratase family. FabA subfamily. In terms of assembly, homodimer.

It is found in the cytoplasm. The catalysed reaction is a (3R)-hydroxyacyl-[ACP] = a (2E)-enoyl-[ACP] + H2O. The enzyme catalyses (3R)-hydroxydecanoyl-[ACP] = (2E)-decenoyl-[ACP] + H2O. It catalyses the reaction (2E)-decenoyl-[ACP] = (3Z)-decenoyl-[ACP]. It participates in lipid metabolism; fatty acid biosynthesis. Functionally, necessary for the introduction of cis unsaturation into fatty acids. Catalyzes the dehydration of (3R)-3-hydroxydecanoyl-ACP to E-(2)-decenoyl-ACP and then its isomerization to Z-(3)-decenoyl-ACP. Can catalyze the dehydratase reaction for beta-hydroxyacyl-ACPs with saturated chain lengths up to 16:0, being most active on intermediate chain length. The chain is 3-hydroxydecanoyl-[acyl-carrier-protein] dehydratase from Aliivibrio fischeri (strain ATCC 700601 / ES114) (Vibrio fischeri).